The chain runs to 284 residues: MKVFILALLALTATTAIAQLETTCSQGFRQYQQQQQPGQRQLLEQMRPCVAFLQQQCRPLRMPFLQTQVEQLSSCQIVQYQCCQQLAQIPEQIRCHAIHNVVEAIMQQQSQQQRQERQQQAQHKSMRMLLENLSLMCNIYVPIQCQQQQQLGQQQQQQLQEQLTPCATFLQHQCSPVTVPFPQIPVDQPTSCQNVQHQCCRQLSQIPEQFRCQAIHNVAEAIRQQQPQQQWQGMYQPQQPAQLESIRMSLQALRSMCSIYIPVQCPAPTAYNIPMVATYTGGAC.

The first 18 residues, 1-18 (MKVFILALLALTATTAIA), serve as a signal peptide directing secretion.

Belongs to the prolamin family. Contains disulfide bonds.

Its function is as follows. Seed storage protein. Might be integrated via inter-chain disulfide bonds within the glutenin polymer. The protein is Avenin-like b4 of Triticum aestivum (Wheat).